Reading from the N-terminus, the 130-residue chain is Small ribosomal subunit protein bS6 (130 aa).

The tract at residues 100–130 is disordered; the sequence is SPMVKAKDERRERHDFASEANDDSEAGDSEE. Over residues 104-116 the composition is skewed to basic and acidic residues; sequence KAKDERRERHDFA. Over residues 119–130 the composition is skewed to acidic residues; it reads ANDDSEAGDSEE.

It belongs to the bacterial ribosomal protein bS6 family.

Functionally, binds together with bS18 to 16S ribosomal RNA. This is Small ribosomal subunit protein bS6 from Yersinia pestis (strain Pestoides F).